A 338-amino-acid chain; its full sequence is N-acetyl-gamma-glutamyl-phosphate reductase (338 aa).

The active site involves Cys-148.

It belongs to the NAGSA dehydrogenase family. Type 1 subfamily.

Its subcellular location is the cytoplasm. The catalysed reaction is N-acetyl-L-glutamate 5-semialdehyde + phosphate + NADP(+) = N-acetyl-L-glutamyl 5-phosphate + NADPH + H(+). The protein operates within amino-acid biosynthesis; L-arginine biosynthesis; N(2)-acetyl-L-ornithine from L-glutamate: step 3/4. Its function is as follows. Catalyzes the NADPH-dependent reduction of N-acetyl-5-glutamyl phosphate to yield N-acetyl-L-glutamate 5-semialdehyde. This chain is N-acetyl-gamma-glutamyl-phosphate reductase, found in Leptospira interrogans serogroup Icterohaemorrhagiae serovar copenhageni (strain Fiocruz L1-130).